Consider the following 4678-residue polypeptide: E3 ubiquitin-protein ligase MYCBP2 (4678 aa).

Disordered regions lie at residues 87-127, 172-192, and 609-628; these read DRDQ…RSKS, SKNS…SKEP, and ASKG…KPYK. Residues 100-124 are compositionally biased toward basic residues; the sequence is SRNKKILNKKKLKRKQKSKSKVKTR. Residues Ser-127, Ser-178, Ser-181, and Ser-183 each carry the phosphoserine modification. RCC1 repeat units lie at residues 600–655, 699–755, 907–957, 958–1008, and 1010–1066; these read DGSI…VISK, NGEV…MMCP, KRDK…VLME, NGDV…VLLM, and GQVF…LRID. The span at 898-910 shows a compositional bias: basic residues; that stretch reads RSHPAQLKHKRDK. Residues 898 to 928 are disordered; that stretch reads RSHPAQLKHKRDKHKDGSGERGEKDASKITT. Over residues 911 to 924 the composition is skewed to basic and acidic residues; that stretch reads HKDGSGERGEKDAS. A PHR domain 1 region spans residues 1235-1386; it reads NRFESHGGGW…GQIPQLLYRL (152 aa). Ser-1624 carries the phosphoserine modification. A PHR domain 2 region spans residues 1726–1884; it reads NRFTKTSQGR…GQIPQILYYR (159 aa). Cys-1748 and Cys-1863 are disulfide-bonded. Disordered regions lie at residues 1993–2012 and 2321–2340; these read FNPN…QGLS and QQDQ…VTAA. Over residues 1994–2012 the composition is skewed to polar residues; it reads NPNQSTDSTTGNQPEQGLS. An RAE1 binding region spans residues 2022-2550; it reads VIESEHPYKP…NQHLGKSLLV (529 aa). Residues 2341 to 2443 form a Filamin repeat; it reads SSNTDMTYGG…IDAGLEVKVK (103 aa). Residue Thr-2683 is modified to Phosphothreonine. Disordered regions lie at residues 2709-2931, 2943-2963, 2979-3020, and 3066-3085; these read LGNS…LHSE, TNSL…VDEG, EQEM…EPAK, and APIR…ETKL. Over residues 2718 to 2733 the composition is skewed to polar residues; it reads NISTSSKPASTSGKSE. Residues 2742 to 2760 show a composition bias toward basic and acidic residues; that stretch reads LKPDGRMSRTTADQKKPRG. Position 2769 is a phosphoserine (Ser-2769). Positions 2775 to 2785 are enriched in basic and acidic residues; sequence DAAKLRSDSHS. Positions 2786–2810 are enriched in polar residues; the sequence is RSLSPNHNTLQTLKSDGRMPSSSRA. Phosphoserine occurs at positions 2787, 2789, 2833, 2839, 2869, 2871, and 2920. The span at 2828-2843 shows a compositional bias: low complexity; sequence PANRSSPSGASSPRSS. The segment covering 2860–2871 has biased composition (basic and acidic residues); sequence TKLDPPRERSKS. The residue at position 2985 (Ser-2985) is a Phosphoserine. Residues 2988–3001 show a composition bias toward basic residues; the sequence is ISRKCANRHTRPKK. A phosphoserine mark is found at Ser-3090, Ser-3478, and Ser-3505. Positions 3605–3631 are disordered; it reads PVEPEEEEDEENKTSKENSEQEKDTRV. A compositionally biased stretch (basic and acidic residues) spans 3616–3631; it reads NKTSKENSEQEKDTRV. The DOC domain occupies 3719–3897; the sequence is SISIQSGFEA…VAQQRNCEAE (179 aa). The disordered stretch occupies residues 3915–3934; the sequence is SGDAEPTPEQEEKALLSSPE. A Phosphothreonine modification is found at Thr-3921. 2 positions are modified to phosphoserine: Ser-3931 and Ser-3932. Zn(2+)-binding residues include Cys-4428, Cys-4431, Cys-4446, His-4448, His-4451, Cys-4454, Cys-4475, Cys-4478, Cys-4544, and Cys-4547. Residues 4428–4479 form an RING-type; atypical zinc finger; it reads CMICFTEALSAAPAIQLDCSHIFHLQCCRRVLENRWLGPRITFGFISCPICK. The tandem cysteine domain stretch occupies residues 4539-4676; that stretch reads YAYYVCYKCR…LGCGVCRNAH (138 aa). The active site involves Cys-4558. Zn(2+) is bound by residues Cys-4575, Cys-4578, Cys-4587, His-4590, Cys-4599, Cys-4602, and Cys-4603. Cys-4610 is a catalytic residue. Cys-4617, Cys-4620, Cys-4638, Cys-4652, His-4658, Cys-4669, and Cys-4672 together coordinate Zn(2+).

This sequence belongs to the RING-Cys relay (RCR) family. In terms of assembly, interacts with MYC. Interacts with TSC2 (tuberin) when TSC2 is in complex with TSC1 (hamartin). Interacts with FBXO45. Interacts with RAE1. Interacts with CPNE1 (via VWFA domain) and CPNE4 (via VWFA domain). Interacts with (sumoylated) RANGAP1; interaction with sumoylated RANGAP1 inhibits E3 ubiquitin-protein ligase activity and promotes MYCBP2 translocation to the nucleus. Interacts with RAN. Interacts with ATP13A2; the interaction inhibits the ubiquitination of TSC2 by MYCBP2. Interacts with USP11. In terms of processing, autoubiquitinated. In terms of tissue distribution, expressed in all tissues examined, expression is exceptionally abundant in brain and thymus. Colocalizes with TSC1 and TSC2 along the neurites and in the growth cones. Highly expressed in peripheral and central neurons. Colocalized with TSC1 in one of the filopodial extensions at the tip of a growth cone.

It is found in the nucleus. The protein resides in the cell projection. Its subcellular location is the axon. The protein localises to the cytoplasm. It localises to the cytoskeleton. The catalysed reaction is [E2 ubiquitin-conjugating enzyme]-S-ubiquitinyl-L-cysteine + [acceptor protein]-L-threonine = [E2 ubiquitin-conjugating enzyme]-L-cysteine + [acceptor protein]-3-O-ubiquitinyl-L-threonine.. Its pathway is protein modification; protein ubiquitination. Atypical E3 ubiquitin-protein ligase which specifically mediates ubiquitination of threonine and serine residues on target proteins, instead of ubiquitinating lysine residues. Shows esterification activity towards both threonine and serine, with a preference for threonine, and acts via two essential catalytic cysteine residues that relay ubiquitin to its substrate via thioester intermediates. Interacts with the E2 enzymes UBE2D1, UBE2D3, UBE2E1 and UBE2L3. Plays a key role in neural development, probably by mediating ubiquitination of threonine residues on target proteins. Involved in different processes such as regulation of neurite outgrowth, synaptic growth, synaptogenesis and axon degeneration. Required for the formation of major central nervous system axon tracts. Required for proper axon growth by regulating axon navigation and axon branching: acts by regulating the subcellular location and stability of MAP3K12/DLK. Required for proper localization of retinogeniculate projections but not for eye-specific segregation. Regulates axon guidance in the olfactory system. Involved in Wallerian axon degeneration, an evolutionarily conserved process that drives the loss of damaged axons: acts by promoting destabilization of NMNAT2, probably via ubiquitination of NMNAT2. Catalyzes ubiquitination of threonine and/or serine residues on NMNAT2, consequences of threonine and/or serine ubiquitination are however unknown. Regulates the internalization of TRPV1 in peripheral sensory neurons. Mediates ubiquitination and subsequent proteasomal degradation of TSC2/tuberin. Independently of the E3 ubiquitin-protein ligase activity, also acts as a guanosine exchange factor (GEF) for RAN in neurons of dorsal root ganglia. May function as a facilitator or regulator of transcriptional activation by MYC. Acts in concert with HUWE1 to regulate the circadian clock gene expression by promoting the lithium-induced ubiquination and degradation of NR1D1. This chain is E3 ubiquitin-protein ligase MYCBP2, found in Homo sapiens (Human).